The chain runs to 622 residues: Polygalacturonase 1 beta-like protein 1 (622 aa).

A signal peptide spans 1–21 (MRKQFVFLLPFLSRLYHVVIA). Residues 118–121 (FSVY) form an FXXY 1 repeat. An N-linked (GlcNAc...) asparagine glycan is attached at Asn-125. 11 FXXY repeats span residues 126–129 (FTNY), 140–143 (FKKY), 154–157 (FRRY), 168–171 (FTGY), 182–185 (FNSY), 196–199 (FKNY), 210–213 (FKAY), 224–227 (FKTY), 239–242 (FTSY), 253–256 (FSSY), and 267–270 (FSNY). A glycan (N-linked (GlcNAc...) asparagine) is linked at Asn-278. FXXY repeat units follow at residues 281-284 (FKGY), 295-298 (FKSY), 309-312 (FLNY), 323-326 (FSSY), 337-340 (FVNY), 351-354 (FSGY), and 365-368 (FKTY). A glycan (N-linked (GlcNAc...) asparagine) is linked at Asn-371. FXXY repeat units follow at residues 374-377 (FKDY) and 384-387 (FAKY). N-linked (GlcNAc...) asparagine glycans are attached at residues Asn-388 and Asn-461. The region spanning 407–621 (FFRESMLKEG…FENDMNWAIA (215 aa)) is the BURP domain.

As to expression, expressed in flowers and stems.

Its subcellular location is the secreted. It localises to the extracellular space. The protein localises to the apoplast. It is found in the cell wall. Its function is as follows. Involved in cell size determination. The protein is Polygalacturonase 1 beta-like protein 1 of Arabidopsis thaliana (Mouse-ear cress).